Here is an 85-residue protein sequence, read N- to C-terminus: Toxin 3FTx-Lei1 (85 aa).

A signal peptide spans Met-1 to Thr-21. 5 disulfides stabilise this stretch: Cys-24-Cys-45, Cys-27-Cys-32, Cys-38-Cys-63, Cys-67-Cys-78, and Cys-79-Cys-84.

It belongs to the three-finger toxin family. Ancestral subfamily. In terms of tissue distribution, expressed by the venom gland.

Its subcellular location is the secreted. This Leioheterodon madagascariensis (Malagasy giant hognose snake) protein is Toxin 3FTx-Lei1.